Here is a 550-residue protein sequence, read N- to C-terminus: Chaperonin GroEL (550 aa).

Residues 30–33, lysine 51, 87–91, glycine 415, and aspartate 496 each bind ATP; these read TLGP and DGTTT.

The protein belongs to the chaperonin (HSP60) family. Forms a cylinder of 14 subunits composed of two heptameric rings stacked back-to-back. Interacts with the co-chaperonin GroES.

Its subcellular location is the cytoplasm. The enzyme catalyses ATP + H2O + a folded polypeptide = ADP + phosphate + an unfolded polypeptide.. In terms of biological role, together with its co-chaperonin GroES, plays an essential role in assisting protein folding. The GroEL-GroES system forms a nano-cage that allows encapsulation of the non-native substrate proteins and provides a physical environment optimized to promote and accelerate protein folding. The chain is Chaperonin GroEL from Rickettsia bellii (strain OSU 85-389).